The following is a 196-amino-acid chain: Putative lipopolysaccharide biosynthesis O-acetyl transferase WbbJ (196 aa).

It belongs to the transferase hexapeptide repeat family.

The protein operates within bacterial outer membrane biogenesis; lipopolysaccharide biosynthesis. Putative O-acetyltransferase that transfers an O-acetyl group to the O antigen. The protein is Putative lipopolysaccharide biosynthesis O-acetyl transferase WbbJ (wbbJ) of Escherichia coli (strain K12).